The sequence spans 305 residues: Translation initiation factor eIF2B subunit alpha (305 aa).

At K35 the chain carries N6-acetyllysine.

This sequence belongs to the eIF-2B alpha/beta/delta subunits family. As to quaternary structure, component of the translation initiation factor 2B (eIF2B) complex which is a heterodecamer of two sets of five different subunits: alpha, beta, gamma, delta and epsilon. Subunits alpha, beta and delta comprise a regulatory subcomplex and subunits epsilon and gamma comprise a catalytic subcomplex. Within the complex, the hexameric regulatory complex resides at the center, with the two heterodimeric catalytic subcomplexes bound on opposite sides.

The protein localises to the cytoplasm. Its subcellular location is the cytosol. Activated by the chemical integrated stress response (ISR) inhibitor ISRIB which stimulates guanine nucleotide exchange factor activity for both phosphorylated and unphosphorylated eIF2. In terms of biological role, acts as a component of the translation initiation factor 2B (eIF2B) complex, which catalyzes the exchange of GDP for GTP on eukaryotic initiation factor 2 (eIF2) gamma subunit. Its guanine nucleotide exchange factor activity is repressed when bound to eIF2 complex phosphorylated on the alpha subunit, thereby limiting the amount of methionyl-initiator methionine tRNA available to the ribosome and consequently global translation is repressed. This Mus musculus (Mouse) protein is Translation initiation factor eIF2B subunit alpha (Eif2b1).